The chain runs to 489 residues: Siroheme synthase (489 aa).

Residues 1–203 (MDFFPVFMRL…GREDAARETL (203 aa)) form a precorrin-2 dehydrogenase /sirohydrochlorin ferrochelatase region. NAD(+) contacts are provided by residues 22 to 23 (PV) and 43 to 44 (PA). The interval 218–489 (GEVFLVGAGP…ARSSTEGAEA (272 aa)) is uroporphyrinogen-III C-methyltransferase. Pro227 lines the S-adenosyl-L-methionine pocket. The Proton acceptor role is filled by Asp250. The Proton donor role is filled by Lys272. S-adenosyl-L-methionine-binding positions include 303–305 (GGD), Ile308, 333–334 (TA), Met385, and Gly414.

It in the N-terminal section; belongs to the precorrin-2 dehydrogenase / sirohydrochlorin ferrochelatase family. The protein in the C-terminal section; belongs to the precorrin methyltransferase family.

It catalyses the reaction uroporphyrinogen III + 2 S-adenosyl-L-methionine = precorrin-2 + 2 S-adenosyl-L-homocysteine + H(+). The enzyme catalyses precorrin-2 + NAD(+) = sirohydrochlorin + NADH + 2 H(+). The catalysed reaction is siroheme + 2 H(+) = sirohydrochlorin + Fe(2+). Its pathway is cofactor biosynthesis; adenosylcobalamin biosynthesis; precorrin-2 from uroporphyrinogen III: step 1/1. It functions in the pathway cofactor biosynthesis; adenosylcobalamin biosynthesis; sirohydrochlorin from precorrin-2: step 1/1. The protein operates within porphyrin-containing compound metabolism; siroheme biosynthesis; precorrin-2 from uroporphyrinogen III: step 1/1. It participates in porphyrin-containing compound metabolism; siroheme biosynthesis; siroheme from sirohydrochlorin: step 1/1. Its pathway is porphyrin-containing compound metabolism; siroheme biosynthesis; sirohydrochlorin from precorrin-2: step 1/1. Functionally, multifunctional enzyme that catalyzes the SAM-dependent methylations of uroporphyrinogen III at position C-2 and C-7 to form precorrin-2 via precorrin-1. Then it catalyzes the NAD-dependent ring dehydrogenation of precorrin-2 to yield sirohydrochlorin. Finally, it catalyzes the ferrochelation of sirohydrochlorin to yield siroheme. The polypeptide is Siroheme synthase (Thioalkalivibrio sulfidiphilus (strain HL-EbGR7)).